The primary structure comprises 78 residues: D-alanyl carrier protein (78 aa).

The Carrier domain maps to 1-78 (MEFKEQVLDL…KIVEALEELR (78 aa)). Position 36 is an O-(pantetheine 4'-phosphoryl)serine (serine 36).

Belongs to the DltC family. 4'-phosphopantetheine is transferred from CoA to a specific serine of apo-DCP.

It is found in the cytoplasm. It participates in cell wall biogenesis; lipoteichoic acid biosynthesis. In terms of biological role, carrier protein involved in the D-alanylation of lipoteichoic acid (LTA). The loading of thioester-linked D-alanine onto DltC is catalyzed by D-alanine--D-alanyl carrier protein ligase DltA. The DltC-carried D-alanyl group is further transferred to cell membrane phosphatidylglycerol (PG) by forming an ester bond, probably catalyzed by DltD. D-alanylation of LTA plays an important role in modulating the properties of the cell wall in Gram-positive bacteria, influencing the net charge of the cell wall. This chain is D-alanyl carrier protein, found in Staphylococcus haemolyticus (strain JCSC1435).